A 108-amino-acid polypeptide reads, in one-letter code: uncharacterized protein (108 aa).

The disordered stretch occupies residues 75 to 94 (TPQVSSFPSSTTSLSHSCTT). Residues 79–94 (SSFPSSTTSLSHSCTT) show a composition bias toward low complexity.

This is an uncharacterized protein from Homo sapiens (Human).